Reading from the N-terminus, the 205-residue chain is 3-demethoxyubiquinol 3-hydroxylase (205 aa).

The Fe cation site is built by glutamate 54, glutamate 84, histidine 87, glutamate 136, glutamate 168, and histidine 171.

This sequence belongs to the COQ7 family. Fe cation is required as a cofactor.

The protein localises to the cell membrane. The catalysed reaction is a 5-methoxy-2-methyl-3-(all-trans-polyprenyl)benzene-1,4-diol + AH2 + O2 = a 3-demethylubiquinol + A + H2O. Its pathway is cofactor biosynthesis; ubiquinone biosynthesis. Its function is as follows. Catalyzes the hydroxylation of 2-nonaprenyl-3-methyl-6-methoxy-1,4-benzoquinol during ubiquinone biosynthesis. The chain is 3-demethoxyubiquinol 3-hydroxylase from Delftia acidovorans (strain DSM 14801 / SPH-1).